Consider the following 430-residue polypeptide: Asparagine--tRNA ligase (430 aa).

The protein belongs to the class-II aminoacyl-tRNA synthetase family. Homodimer.

The protein resides in the cytoplasm. It carries out the reaction tRNA(Asn) + L-asparagine + ATP = L-asparaginyl-tRNA(Asn) + AMP + diphosphate + H(+). The sequence is that of Asparagine--tRNA ligase from Pelotomaculum thermopropionicum (strain DSM 13744 / JCM 10971 / SI).